The following is a 295-amino-acid chain: MTNSSYIGRFAPTPSGFLHFGSLVAALASWLDARAVNGRWLLRMEDTDPPREMPGARDAILQTLERYGLEWDGEVVFQSQRHDAYAAVVDRLFNMGLAYACICSRKQLEGYNGIYPGLCRNAGHAREGAAIRLRVPELIYRFTDRVQGEYQQHLGREVGDFVIQRRDGLYAYQLAVVLDDAWQGVTDIVRGADLLDNTPRQLYLQELLGFSQPRYLHIPLIVQPDGHKLGKSYRSPPLQVEHATPLLLRALRALGQDTDPELLVATPAEVLAVARKQWRPEAIAQKTTVPEADLR.

Residues 9-13 and Glu-45 each bind L-glutamate; that span reads RFAPT. Positions 12–22 match the 'HIGH' region motif; it reads PTPSGFLHFGS. Residues Cys-101, Cys-103, Tyr-115, and Cys-119 each coordinate Zn(2+). Tyr-172 and Arg-190 together coordinate L-glutamate. The short motif at 228–232 is the 'KMSKS' region element; sequence KLGKS. ATP is bound at residue Lys-231.

Belongs to the class-I aminoacyl-tRNA synthetase family. GluQ subfamily. Zn(2+) serves as cofactor.

In terms of biological role, catalyzes the tRNA-independent activation of glutamate in presence of ATP and the subsequent transfer of glutamate onto a tRNA(Asp). Glutamate is transferred on the 2-amino-5-(4,5-dihydroxy-2-cyclopenten-1-yl) moiety of the queuosine in the wobble position of the QUC anticodon. This chain is Glutamyl-Q tRNA(Asp) synthetase, found in Pseudomonas putida (strain GB-1).